An 895-amino-acid polypeptide reads, in one-letter code: DNA mismatch repair protein MutS (895 aa).

Residue 607 to 614 (GPNMSGKS) coordinates ATP.

This sequence belongs to the DNA mismatch repair MutS family.

Functionally, this protein is involved in the repair of mismatches in DNA. It is possible that it carries out the mismatch recognition step. This protein has a weak ATPase activity. This chain is DNA mismatch repair protein MutS, found in Bacillus cytotoxicus (strain DSM 22905 / CIP 110041 / 391-98 / NVH 391-98).